The chain runs to 58 residues: Sperm protamine P1 (58 aa).

The disordered stretch occupies residues 1–58 (MARYRRRSRSRSRSRYGRRRRRSRSRRRRSRRRRRRRGRRGRGYHRRSPHRRRRRRRR).

Belongs to the protamine P1 family. Testis.

The protein resides in the nucleus. The protein localises to the chromosome. Functionally, protamines substitute for histones in the chromatin of sperm during the haploid phase of spermatogenesis. They compact sperm DNA into a highly condensed, stable and inactive complex. The protein is Sperm protamine P1 (PRM1) of Monodelphis domestica (Gray short-tailed opossum).